Here is a 415-residue protein sequence, read N- to C-terminus: Serine hydroxymethyltransferase 1 (415 aa).

(6S)-5,6,7,8-tetrahydrofolate is bound by residues Leu122 and Gly126–Leu128. The residue at position 230 (Lys230) is an N6-(pyridoxal phosphate)lysine.

Belongs to the SHMT family. In terms of assembly, homodimer. Pyridoxal 5'-phosphate serves as cofactor.

It localises to the cytoplasm. It carries out the reaction (6R)-5,10-methylene-5,6,7,8-tetrahydrofolate + glycine + H2O = (6S)-5,6,7,8-tetrahydrofolate + L-serine. It functions in the pathway one-carbon metabolism; tetrahydrofolate interconversion. It participates in amino-acid biosynthesis; glycine biosynthesis; glycine from L-serine: step 1/1. Its function is as follows. Catalyzes the reversible interconversion of serine and glycine with tetrahydrofolate (THF) serving as the one-carbon carrier. This reaction serves as the major source of one-carbon groups required for the biosynthesis of purines, thymidylate, methionine, and other important biomolecules. Also exhibits THF-independent aldolase activity toward beta-hydroxyamino acids, producing glycine and aldehydes, via a retro-aldol mechanism. The sequence is that of Serine hydroxymethyltransferase 1 from Burkholderia thailandensis (strain ATCC 700388 / DSM 13276 / CCUG 48851 / CIP 106301 / E264).